Reading from the N-terminus, the 247-residue chain is MVTNSQEGETLPATSSVTGLPQKRFYRQRAHSNPIADHSFDYPARPEDVDWRSLYPNIGSEQQVEFADIGCGYGGFLVTLGEMFPDKLAIGMEIRVKVSDYVIDRIAALRMKNAETSAYQNIACIRTNAMKYLPNYFQKSQLEKMFFLYPDPHFKRAKHKWRIINQALLSEYAYVLRSGGLVYTMTDVEDLHKWIVSHMTQHPLYERLTDEEANADPITPKLYQSSEEGAKVVRNKGDHFLAIFRRI.

Residues Gly70, 93-94 (EI), 128-129 (NA), and Leu148 each bind S-adenosyl-L-methionine. The active site involves Asp151. S-adenosyl-L-methionine is bound at residue 226–228 (SEE).

This sequence belongs to the class I-like SAM-binding methyltransferase superfamily. TrmB family.

It is found in the nucleus. It carries out the reaction guanosine(46) in tRNA + S-adenosyl-L-methionine = N(7)-methylguanosine(46) in tRNA + S-adenosyl-L-homocysteine. The protein operates within tRNA modification; N(7)-methylguanine-tRNA biosynthesis. Functionally, catalyzes the formation of N(7)-methylguanine at position 46 (m7G46) in tRNA. The chain is tRNA (guanine-N(7)-)-methyltransferase from Drosophila virilis (Fruit fly).